The sequence spans 561 residues: MYSNIELFTMIAIIVLLTKPLGTYMYNIFEYKPMRSDKIFLPVENFIYKITGINPEEEMDWKKYALTFLLVNMVMMIITYFILRVQQFLPLNPTGAKNMESSLAFNTVISFMTNTNLQHYAGEDGITFLSQMIVIVFLMFTSAASGLVTAAAIMRGLSKKTTNLGNFYADFVRITVRLLLPISMLATLILVWQGVPQTFAGKVVVDTLEGGKQTIITGPVAVLESIKHLGTNGGGFFGANSSHPFENPTWLTNMIEMLLMMLLPTSLIYTYGLMINNKKHALVLYISLFVIFILLAVGAVYAENHPGVAYSKLHIYGKPYGNYEGKEVRFGVSQSPLFATVTTAFTTGSVDSMHDSYTPLGGAVPLILMMLNTIFGGDGAGLQNIIMYTILTVFLTGLMVGRTPEYLGRKIETKEIKLIALAILVHPFLILFSSALTVMLKVGASSVTNPLYHGLTQVLYEFSSAAANNGSEFAGFIGNTVFMNIMTGLVMFFGRYITIILMLAVAGSMAEKIPAPPSPGTFRTDNAIFGAIFIAVVLIVGALTFFPAVILGPISEFLSMT.

A run of 11 helical transmembrane segments spans residues 5 to 25 (IELF…GTYM), 63 to 83 (KYAL…YFIL), 103 to 122 (LAFN…HYAG), 133 to 153 (IVIV…AAAI), 179 to 199 (LLPI…PQTF), 255 to 275 (IEML…GLMI), 281 to 301 (ALVL…GAVY), 380 to 400 (AGLQ…GLMV), 418 to 438 (LIAL…ALTV), 485 to 505 (IMTG…MLAV), and 531 to 551 (AIFI…AVIL).

This sequence belongs to the KdpA family. In terms of assembly, the system is composed of three essential subunits: KdpA, KdpB and KdpC.

The protein localises to the cell membrane. Its function is as follows. Part of the high-affinity ATP-driven potassium transport (or Kdp) system, which catalyzes the hydrolysis of ATP coupled with the electrogenic transport of potassium into the cytoplasm. This subunit binds the extracellular potassium ions and delivers the ions to the membrane domain of KdpB through an intramembrane tunnel. The sequence is that of Potassium-transporting ATPase potassium-binding subunit from Caldanaerobacter subterraneus subsp. tengcongensis (strain DSM 15242 / JCM 11007 / NBRC 100824 / MB4) (Thermoanaerobacter tengcongensis).